The chain runs to 279 residues: Shikimate dehydrogenase (NADP(+)) (279 aa).

Shikimate is bound by residues 21 to 23 (SKS) and threonine 68. Lysine 72 functions as the Proton acceptor in the catalytic mechanism. Glutamate 84 contacts NADP(+). Residues asparagine 93 and aspartate 109 each coordinate shikimate. NADP(+) is bound by residues 133 to 137 (GAGGA), 157 to 162 (NRTQAK), and methionine 220. Tyrosine 222 lines the shikimate pocket. Glycine 244 lines the NADP(+) pocket.

The protein belongs to the shikimate dehydrogenase family. Homodimer.

The enzyme catalyses shikimate + NADP(+) = 3-dehydroshikimate + NADPH + H(+). The protein operates within metabolic intermediate biosynthesis; chorismate biosynthesis; chorismate from D-erythrose 4-phosphate and phosphoenolpyruvate: step 4/7. Its function is as follows. Involved in the biosynthesis of the chorismate, which leads to the biosynthesis of aromatic amino acids. Catalyzes the reversible NADPH linked reduction of 3-dehydroshikimate (DHSA) to yield shikimate (SA). This is Shikimate dehydrogenase (NADP(+)) from Shewanella halifaxensis (strain HAW-EB4).